The sequence spans 274 residues: Putative ABC transporter ATP-binding protein MM_1037 (274 aa).

The 234-residue stretch at 2-235 (IRLENVSYCY…PSLKDLGLTP (234 aa)) folds into the ABC transporter domain. 35-42 (GRNGSGKS) is a binding site for ATP.

This sequence belongs to the ABC transporter superfamily.

Its subcellular location is the cell membrane. Functionally, probably part of an ABC transporter complex. Responsible for energy coupling to the transport system. This Methanosarcina mazei (strain ATCC BAA-159 / DSM 3647 / Goe1 / Go1 / JCM 11833 / OCM 88) (Methanosarcina frisia) protein is Putative ABC transporter ATP-binding protein MM_1037.